The following is a 101-amino-acid chain: Interleukin-8 (101 aa).

A signal peptide spans 1–22; sequence MPSQLRVAVLAAFLLSAVLCEG. 2 disulfides stabilise this stretch: C34/C61 and C36/C77.

The protein belongs to the intercrine alpha (chemokine CxC) family. Homodimer. Interacts with TNFAIP6 (via Link domain); this interaction interferes with chemokine binding to glycosaminoglycans.

The protein localises to the secreted. Functionally, chemotactic factor that mediates inflammatory response by attracting neutrophils, basophils, and T-cells to clear pathogens and protect the host from infection. Also plays an important role in neutrophil activation. Released in response to an inflammatory stimulus, exerts its effect by binding to the G-protein-coupled receptors CXCR1 and CXCR2, primarily found in neutrophils, monocytes and endothelial cells. G-protein heterotrimer (alpha, beta, gamma subunits) constitutively binds to CXCR1/CXCR2 receptor and activation by IL8 leads to beta and gamma subunits release from Galpha (GNAI2 in neutrophils) and activation of several downstream signaling pathways including PI3K and MAPK pathways. This is Interleukin-8 (CXCL8) from Cavia porcellus (Guinea pig).